Reading from the N-terminus, the 632-residue chain is Arginine--tRNA ligase (632 aa).

Residues 120-130 carry the 'HIGH' region motif; it reads ANPIHPLHIGH.

The protein belongs to the class-I aminoacyl-tRNA synthetase family.

The protein resides in the cytoplasm. It carries out the reaction tRNA(Arg) + L-arginine + ATP = L-arginyl-tRNA(Arg) + AMP + diphosphate. This Pyrobaculum islandicum (strain DSM 4184 / JCM 9189 / GEO3) protein is Arginine--tRNA ligase.